The chain runs to 178 residues: Small ribosomal subunit protein uS5 (178 aa).

In terms of domain architecture, S5 DRBM spans 15-78 (FEEKIIEIRR…SAAKRNIVEV (64 aa)).

The protein belongs to the universal ribosomal protein uS5 family. Part of the 30S ribosomal subunit. Contacts proteins S4 and S8.

With S4 and S12 plays an important role in translational accuracy. In terms of biological role, located at the back of the 30S subunit body where it stabilizes the conformation of the head with respect to the body. The protein is Small ribosomal subunit protein uS5 of Thermotoga maritima (strain ATCC 43589 / DSM 3109 / JCM 10099 / NBRC 100826 / MSB8).